The chain runs to 731 residues: Elongation factor 2 (731 aa).

The region spanning 19–260 (KHIRNIGIVA…MVVHHLPNPL (242 aa)) is the tr-type G domain. GTP contacts are provided by residues 28-35 (AHIDHGKT), 94-98 (DTPGH), and 148-151 (NKVD). At histidine 597 the chain carries Diphthamide.

The protein belongs to the TRAFAC class translation factor GTPase superfamily. Classic translation factor GTPase family. EF-G/EF-2 subfamily.

The protein localises to the cytoplasm. Catalyzes the GTP-dependent ribosomal translocation step during translation elongation. During this step, the ribosome changes from the pre-translocational (PRE) to the post-translocational (POST) state as the newly formed A-site-bound peptidyl-tRNA and P-site-bound deacylated tRNA move to the P and E sites, respectively. Catalyzes the coordinated movement of the two tRNA molecules, the mRNA and conformational changes in the ribosome. The chain is Elongation factor 2 from Methanoregula boonei (strain DSM 21154 / JCM 14090 / 6A8).